The chain runs to 501 residues: MSDQQLDQHELQQEENKLIAQRKEKLAAVREARAIAFPNDFRRDAYFADLQKQYADKTKEELEAAAIPVKVAGRIMLNRGSFIVLQDSSERLQVYVNRKTLPEETLAEIKTWDLGDIIGAEGVLARSGKGDLYVDMTSVRLLTKSLRPLPDKHHGLTDTEQRYRQRYVDLMVNEETRHTFRVRSQVIAHIRRFLSERGFLEVETPMLQTIPGGAAAKPFETHHNALDMAMFLRIAPELYLKRLVVGGFEKVFEINRNFRNEGVSTRHNPEFTMLEFYQAYADYEDNMDLTEELFRELAQAVLGTTDVPYGDKVFHFGEPFVRLSVFDSILKYNPEITAADLNDVEKARAIAKKAGAKVLGHEGLGKLQVMIFEELVEHKLEQPHFITRYPFEVSPLARRNDEDPSVTDRFELFIGGREIANAYSELNDAEDQAERFMLQVKEKDAGDDEAMHYDADFINALEYGMPPTAGEGIGIDRLVMLLTNSPSIRDVILFPHMRPQA.

Positions 411 and 418 each coordinate Mg(2+).

It belongs to the class-II aminoacyl-tRNA synthetase family. Homodimer. It depends on Mg(2+) as a cofactor.

Its subcellular location is the cytoplasm. It catalyses the reaction tRNA(Lys) + L-lysine + ATP = L-lysyl-tRNA(Lys) + AMP + diphosphate. This chain is Lysine--tRNA ligase, found in Pseudomonas aeruginosa (strain LESB58).